We begin with the raw amino-acid sequence, 180 residues long: Acireductone dioxygenase (180 aa).

Fe(2+)-binding residues include H97, H99, E103, and H141. Positions 97, 99, 103, and 141 each coordinate Ni(2+).

It belongs to the acireductone dioxygenase (ARD) family. In terms of assembly, monomer. The cofactor is Fe(2+). Ni(2+) is required as a cofactor.

The catalysed reaction is 1,2-dihydroxy-5-(methylsulfanyl)pent-1-en-3-one + O2 = 3-(methylsulfanyl)propanoate + CO + formate + 2 H(+). It catalyses the reaction 1,2-dihydroxy-5-(methylsulfanyl)pent-1-en-3-one + O2 = 4-methylsulfanyl-2-oxobutanoate + formate + 2 H(+). It functions in the pathway amino-acid biosynthesis; L-methionine biosynthesis via salvage pathway; L-methionine from S-methyl-5-thio-alpha-D-ribose 1-phosphate: step 5/6. Its function is as follows. Catalyzes 2 different reactions between oxygen and the acireductone 1,2-dihydroxy-3-keto-5-methylthiopentene (DHK-MTPene) depending upon the metal bound in the active site. Fe-containing acireductone dioxygenase (Fe-ARD) produces formate and 2-keto-4-methylthiobutyrate (KMTB), the alpha-ketoacid precursor of methionine in the methionine recycle pathway. Ni-containing acireductone dioxygenase (Ni-ARD) produces methylthiopropionate, carbon monoxide and formate, and does not lie on the methionine recycle pathway. The polypeptide is Acireductone dioxygenase (Enterobacter sp. (strain 638)).